The primary structure comprises 663 residues: MNPADHPSVYVAGYLALYGADESDELNIDRKDIRAAIPTPAPLPINIDHRRDCTVGAVLALIDDEHGLFFLGKINCPVMVRTLETAASQEIFSELDNLKPDDKLLYIITNYLPSVSLSSRRLAPGETADETFLAHVALCLLGKRIGTIVTYDLTPEEAIEPFRKLSPNSKATLLSQGKETERLLGEMVWYPSKNAITKALLGTAVNNMLLRDRWQIISERRRMAGITGQKYLQASSFTALTDSMTSNNVSVTHPICENANPGNIQKDEEMQVCISPAQTSETLNAGVLSGCNDFHRLPHSDPASTSDQTNLQSLIEPSMNTQSSRPPGDDFIWVPIKSYNQLVSRNASQPTNIPDIAITSNQPPFIPPALMNTSISGQHSIPSGYAQYGYPTPVGTHNSLLPLGPVNQMGGFQYGPQVYPLSYGQSPLEAKLTALLECMTKEKRPVDEEHRGDDMHTTREERGRRGRKRPYEFDRSIESDLYYPGEFRRSNFSPPQASSMKYEETTGGRHDLSQTGPVLNSLMGAVTSLQKEVERLNGGNLPISNAQSSYGVPNGMHAPVYYSYPPPGTHPTVSWPMGVERPMPSTEGKTSTNSTVIPVPVSDPEAGRNVPITATISQERSDGIQKESIEQSRDTMNASAVAGIHRTSDAGVDVFINQMMAHQ.

Residues His-49, Ser-116, and His-135 each act as charge relay system in the active site. The interaction with pAP stretch occupies residues 329 to 348; the sequence is DDFIWVPIKSYNQLVSRNAS. 3 disordered regions span residues 444–471, 486–512, and 583–608; these read RPVDEEHRGDDMHTTREERGRRGRKRPY, EFRRSNFSPPQASSMKYEETTGGRHDL, and MPSTEGKTSTNSTVIPVPVSDPEAGR. The segment covering 490-499 has biased composition (polar residues); it reads SNFSPPQASS. The span at 501-512 shows a compositional bias: basic and acidic residues; it reads KYEETTGGRHDL. Residues 587–596 show a composition bias toward polar residues; sequence EGKTSTNSTV. The interaction with major capsid protein stretch occupies residues 643–663; it reads GIHRTSDAGVDVFINQMMAHQ.

This sequence belongs to the herpesviridae capsid scaffolding protein family. Homomultimer. Interacts with major capsid protein. In terms of assembly, exists in a monomer-dimer equilibrium with the dimer being the active species. In terms of processing, capsid scaffolding protein is cleaved by assemblin after formation of the spherical procapsid. As a result, the capsid obtains its mature, icosahedral shape. Cleavages occur at two or more sites: release (R-site) and maturation (M-site).

The protein resides in the host cytoplasm. The protein localises to the host nucleus. It carries out the reaction Cleaves -Ala-|-Ser- and -Ala-|-Ala- bonds in the scaffold protein.. Functionally, acts as a scaffold protein by binding major capsid protein in the cytoplasm, inducing the nuclear localization of both proteins. Multimerizes in the nucleus such as major capsid protein forms the icosahedral T=16 capsid. Autocatalytic cleavage releases the assembly protein, and subsequently abolishes interaction with major capsid protein. Cleavages products are evicted from the capsid before or during DNA packaging. Its function is as follows. Protease that plays an essential role in virion assembly within the nucleus. Catalyzes the cleavage of the assembly protein after formation of the spherical procapsid. By that cleavage, the capsid matures and gains its icosahedral shape. The cleavage sites seem to include -Ala-Ser-, -Ala-Ala-, as well as Ala-Thr bonds. Assemblin and cleavages products are evicted from the capsid before or during DNA packaging. Plays a major role in capsid assembly. Acts as a scaffold protein by binding major capsid protein. Multimerizes in the nucleus such as major capsid protein forms the icosahedral T=16 capsid. Cleaved by assemblin after capsid completion. The cleavages products are evicted from the capsid before or during DNA packaging. The protein is Capsid scaffolding protein (MDV038) of Gallid herpesvirus 2 (strain Chicken/Md5/ATCC VR-987) (GaHV-2).